Reading from the N-terminus, the 217-residue chain is Large ribosomal subunit protein bL25 (217 aa).

Belongs to the bacterial ribosomal protein bL25 family. CTC subfamily. In terms of assembly, part of the 50S ribosomal subunit; part of the 5S rRNA/L5/L18/L25 subcomplex. Contacts the 5S rRNA. Binds to the 5S rRNA independently of L5 and L18.

Its function is as follows. This is one of the proteins that binds to the 5S RNA in the ribosome where it forms part of the central protuberance. The protein is Large ribosomal subunit protein bL25 of Methylobacterium sp. (strain 4-46).